The primary structure comprises 359 residues: Medium-wave-sensitive opsin 1 (359 aa).

At 1–47 (MAQRLTGEQTLDHYEDSTHASIFTYTNSNSTKGPFEGPNYHIAPRWV) the chain is on the extracellular side. The tract at residues 12–38 (DHYEDSTHASIFTYTNSNSTKGPFEGP) is required for 11-cis-retinal regeneration. N-linked (GlcNAc...) asparagine glycosylation is present at N29. A helical transmembrane segment spans residues 48-72 (YHLTSTWMILVVVASVFTNGLVLAA). Over 73–84 (TMRFKKLRHPLN) the chain is Cytoplasmic. A helical membrane pass occupies residues 85–110 (WILVNLAVADLAETIIASTISVVNQI). Over 111 to 124 (YGYFVLGHPLCVIE) the chain is Extracellular. The cysteines at positions 121 and 198 are disulfide-linked. The helical transmembrane segment at 125–144 (GYIVSLCGITGLWSLAIISW) threads the bilayer. Residues 145–163 (ERWLVVCKPFGNVRFDAKL) lie on the Cytoplasmic side of the membrane. Residues 164–187 (ATVGIVFSWVWAAIWTAPPIFGWS) traverse the membrane as a helical segment. Over 188–213 (RYWPYGLKTSCGPDVFSGTSYPGVQS) the chain is Extracellular. The chain crosses the membrane as a helical span at residues 214–241 (YMMVLMVTCCIFPLSIIVLCYLQVWLAI). Residues 242-263 (RAVAKQQKESESTQKAEKEVTR) are Cytoplasmic-facing. The helical transmembrane segment at 264–287 (MVVVMVFAYCLCWGPYTFFACFAT) threads the bilayer. Over 288-295 (AHPGYAFH) the chain is Extracellular. The chain crosses the membrane as a helical span at residues 296-320 (PLVASLPSYFAKSATIYNPIIYVFM). N6-(retinylidene)lysine is present on K307. Residues 321–359 (NRQFRNCILHLFGKKVDDSSELSSTSKTEVSSVSSVSPA) are Cytoplasmic-facing.

Belongs to the G-protein coupled receptor 1 family. Opsin subfamily. Monomer. Homodimer. Homotetramer. In terms of processing, N-glycosylated. O-glycosylated. Phosphorylated on some or all of the serine and threonine residues present in the C-terminal region. In terms of tissue distribution, expressed in retina (at protein level). Expressed in cone photoreceptor cells (at protein level).

It localises to the cell membrane. Its function is as follows. Visual pigments are the light-absorbing molecules that mediate vision. They consist of an apoprotein, opsin, covalently linked to cis-retinal. May increase spectral sensitivity in dim light. This Mus musculus (Mouse) protein is Medium-wave-sensitive opsin 1 (Opn1mw).